The primary structure comprises 833 residues: Leucine--tRNA ligase (833 aa).

Residues 41-52 (PYPSGAGLHVGH) carry the 'HIGH' region motif. Positions 610 to 614 (KMSKS) match the 'KMSKS' region motif. Lys-613 contributes to the ATP binding site.

This sequence belongs to the class-I aminoacyl-tRNA synthetase family.

It is found in the cytoplasm. The catalysed reaction is tRNA(Leu) + L-leucine + ATP = L-leucyl-tRNA(Leu) + AMP + diphosphate. The protein is Leucine--tRNA ligase of Streptococcus pneumoniae (strain CGSP14).